We begin with the raw amino-acid sequence, 232 residues long: MSARDRLIVGLDLPTLAEAEKIVSALGEEVLFYKIGYQLAFAGGLDFARDLAASGKQVFLDMKLLDIDNTVAKGVENIVKMGVSMLTLHAYPKAMKSAVEAARGSNLCLLAVTVLTSMDEQDVMDAGYNYDPQSLVLRRAEQAHAAGMGGIVCSAAEAAAVRKIIGGDMALVTPGIRPAGAEKGDQKRVMTPADALAAGSSHLVVGRPIVAAPDPLAASRAILAEMESALSG.

Substrate-binding positions include Asp12, Lys34, 61-70 (DMKLLDIDNT), Thr116, Arg177, Gln186, Gly206, and Arg207. The active-site Proton donor is Lys63.

This sequence belongs to the OMP decarboxylase family. Type 1 subfamily. In terms of assembly, homodimer.

The enzyme catalyses orotidine 5'-phosphate + H(+) = UMP + CO2. It participates in pyrimidine metabolism; UMP biosynthesis via de novo pathway; UMP from orotate: step 2/2. Catalyzes the decarboxylation of orotidine 5'-monophosphate (OMP) to uridine 5'-monophosphate (UMP). The protein is Orotidine 5'-phosphate decarboxylase of Sinorhizobium medicae (strain WSM419) (Ensifer medicae).